The following is a 268-amino-acid chain: Hydroxyacylglutathione hydrolase (268 aa).

Residues His-56, His-58, Asp-60, His-61, His-112, Asp-137, and His-176 each contribute to the Zn(2+) site. 176–178 lines the substrate pocket; sequence HEY.

The protein belongs to the metallo-beta-lactamase superfamily. Glyoxalase II family. As to quaternary structure, monomer. The cofactor is Zn(2+).

It catalyses the reaction an S-(2-hydroxyacyl)glutathione + H2O = a 2-hydroxy carboxylate + glutathione + H(+). Its pathway is secondary metabolite metabolism; methylglyoxal degradation; (R)-lactate from methylglyoxal: step 2/2. Thiolesterase that catalyzes the hydrolysis of S-D-lactoyl-glutathione to form glutathione and D-lactic acid. This is Hydroxyacylglutathione hydrolase (hagh) from Dictyostelium discoideum (Social amoeba).